Consider the following 206-residue polypeptide: Small ribosomal subunit protein uS4 (206 aa).

Positions 18–46 are disordered; sequence NIWGRPKSPVNRREYGPGQHGQRRKQKMS. Residues 94-154 enclose the S4 RNA-binding domain; that stretch reads RRLDAVVYRA…EKSRQMAALL (61 aa).

This sequence belongs to the universal ribosomal protein uS4 family. In terms of assembly, part of the 30S ribosomal subunit. Contacts protein S5. The interaction surface between S4 and S5 is involved in control of translational fidelity.

Its function is as follows. One of the primary rRNA binding proteins, it binds directly to 16S rRNA where it nucleates assembly of the body of the 30S subunit. With S5 and S12 plays an important role in translational accuracy. The polypeptide is Small ribosomal subunit protein uS4 (Dinoroseobacter shibae (strain DSM 16493 / NCIMB 14021 / DFL 12)).